Reading from the N-terminus, the 466-residue chain is Cytochrome P450 85A1 (466 aa).

The chain crosses the membrane as a helical span at residues 1–21 (MVLAVLIGVLVGIVLVSSLLL). Heme is bound at residue cysteine 416.

It belongs to the cytochrome P450 family. Requires heme as cofactor.

The protein resides in the membrane. It carries out the reaction 6-deoxoteasterone + reduced [NADPH--hemoprotein reductase] + O2 = 6alpha-hydroxyteasterone + oxidized [NADPH--hemoprotein reductase] + H2O + H(+). The enzyme catalyses 6alpha-hydroxytyphasterol + reduced [NADPH--hemoprotein reductase] + O2 = teasterone + oxidized [NADPH--hemoprotein reductase] + 2 H2O + H(+). It catalyses the reaction 3-dehydro-6-deoxoteasterone + reduced [NADPH--hemoprotein reductase] + O2 = 3-dehydro-6alpha-hydroxyteasterone + oxidized [NADPH--hemoprotein reductase] + H2O + H(+). The catalysed reaction is 3-dehydro-6alpha-hydroxyteasterone + reduced [NADPH--hemoprotein reductase] + O2 = 3-dehydroteasterone + oxidized [NADPH--hemoprotein reductase] + 2 H2O + H(+). It carries out the reaction 6-deoxotyphasterol + reduced [NADPH--hemoprotein reductase] + O2 = 6alpha-hydroxytyphasterol + oxidized [NADPH--hemoprotein reductase] + H2O + H(+). The enzyme catalyses 6alpha-hydroxytyphasterol + reduced [NADPH--hemoprotein reductase] + O2 = typhasterol + oxidized [NADPH--hemoprotein reductase] + 2 H2O + H(+). It catalyses the reaction 6-deoxocastasterone + reduced [NADPH--hemoprotein reductase] + O2 = 6alpha-hydroxycastasterone + oxidized [NADPH--hemoprotein reductase] + H2O + H(+). The catalysed reaction is 6alpha-hydroxycastasterone + reduced [NADPH--hemoprotein reductase] + O2 = castasterone + oxidized [NADPH--hemoprotein reductase] + 2 H2O + H(+). It carries out the reaction 3-dehydro-6-deoxoteasterone + 2 reduced [NADPH--hemoprotein reductase] + 2 O2 = 3-dehydroteasterone + 2 oxidized [NADPH--hemoprotein reductase] + 3 H2O + 2 H(+). The enzyme catalyses 6-deoxocastasterone + 2 reduced [NADPH--hemoprotein reductase] + 2 O2 = castasterone + 2 oxidized [NADPH--hemoprotein reductase] + 3 H2O + 2 H(+). It catalyses the reaction 6-deoxoteasterone + 2 reduced [NADPH--hemoprotein reductase] + 2 O2 = teasterone + 2 oxidized [NADPH--hemoprotein reductase] + 3 H2O + 2 H(+). The catalysed reaction is 6-deoxotyphasterol + 2 reduced [NADPH--hemoprotein reductase] + 2 O2 = typhasterol + 2 oxidized [NADPH--hemoprotein reductase] + 3 H2O + 2 H(+). Its pathway is plant hormone biosynthesis; brassinosteroid biosynthesis. In terms of biological role, involved in reduction steps of the biosynthesis of plant campesterol-derivative steroids, ending to castasterone (CS) but missing brassinolide (BL). Catalyzes the C6-oxidation step in brassinosteroids biosynthesis; the conversion of 6-deoxoteasterone (6-deoxoTE) to teasterone (TE), 3-dehydro-6-deoxoteasterone (6-deoxo3DT, 6-deoxo-3-DHT) to 3-dehydroteasterone (3DT, 3-DHT), 6-deoxotyphasterol (6-deoxoTY) to typhasterol (TY) and of 6-deoxocastasterone (6-deoxoCS) to castasterone (CS). The chain is Cytochrome P450 85A1 from Brachypodium distachyon (Purple false brome).